We begin with the raw amino-acid sequence, 189 residues long: Nucleolar protein 16 (189 aa).

Residues Met1 to Ser33 show a composition bias toward basic residues. The segment at Met1 to Lys34 is disordered.

This sequence belongs to the NOP16 family.

It localises to the nucleus. It is found in the nucleolus. The polypeptide is Nucleolar protein 16 (Caenorhabditis elegans).